The primary structure comprises 109 residues: LPSLSADAEAPSPLSLKADAPLAHIDSGLLGVPYAKQPIGELRVTTLRLIELPPEKLVVGAPVYLYQFSYESPSSAIKQEVVGHIEDLTYVFKGSQYQDIESPTAYQSK.

The protein belongs to the type-B carboxylesterase/lipase family. As to expression, fat body, the site of their biosynthesis, and the hemolymph where it is secreted.

It catalyses the reaction juvenile hormone I + H2O = juvenile hormone I carboxylate + methanol + H(+). It carries out the reaction juvenile hormone III + H2O = juvenile hormone III carboxylate + methanol + H(+). Functionally, JH esterase plays a crucial role in the decrease of JH activity in lepidopteran insects, by hydrolyzing the methyl ester of JH. It is also involved in the transport of JH. The chain is Juvenile hormone esterase, isoform A from Trichoplusia ni (Cabbage looper).